The primary structure comprises 400 residues: Elongation factor Tu (400 aa).

The region spanning 10-208 (KPHVNVGTIG…AMDNYIPEPQ (199 aa)) is the tr-type G domain. The interval 19–26 (GHIDHGKS) is G1. 19–26 (GHIDHGKS) is a binding site for GTP. Position 26 (Ser26) interacts with Mg(2+). Positions 60-64 (GITIN) are G2. The interval 81–84 (DCPG) is G3. GTP-binding positions include 81–85 (DCPGH) and 136–139 (NKTD). The tract at residues 136–139 (NKTD) is G4. The tract at residues 174–176 (SAL) is G5.

It belongs to the TRAFAC class translation factor GTPase superfamily. Classic translation factor GTPase family. EF-Tu/EF-1A subfamily. Monomer.

Its subcellular location is the cytoplasm. The enzyme catalyses GTP + H2O = GDP + phosphate + H(+). Its function is as follows. GTP hydrolase that promotes the GTP-dependent binding of aminoacyl-tRNA to the A-site of ribosomes during protein biosynthesis. In Thermotoga petrophila (strain ATCC BAA-488 / DSM 13995 / JCM 10881 / RKU-1), this protein is Elongation factor Tu.